A 198-amino-acid chain; its full sequence is NAD(P)H dehydrogenase (quinone) (198 aa).

The region spanning 4–189 (VLVLYYSMYG…SIARYQGEYV (186 aa)) is the Flavodoxin-like domain. FMN-binding positions include 10 to 15 (SMYGHI) and 78 to 80 (TRF). Y12 lines the NAD(+) pocket. Position 98 (W98) interacts with substrate. FMN-binding positions include 113-118 (STGTGG) and H133.

This sequence belongs to the WrbA family. The cofactor is FMN.

It carries out the reaction a quinone + NADH + H(+) = a quinol + NAD(+). The catalysed reaction is a quinone + NADPH + H(+) = a quinol + NADP(+). This chain is NAD(P)H dehydrogenase (quinone), found in Escherichia coli O157:H7.